We begin with the raw amino-acid sequence, 1044 residues long: Isoleucine--tRNA ligase (1044 aa).

Positions 48–58 match the 'HIGH' region motif; it reads PFATGLPHFGH. The 'KMSKS' region signature appears at 594–598; the sequence is KMSKS. Position 597 (Lys597) interacts with ATP.

Belongs to the class-I aminoacyl-tRNA synthetase family. IleS type 2 subfamily. As to quaternary structure, monomer. Zn(2+) serves as cofactor.

The protein resides in the cytoplasm. It catalyses the reaction tRNA(Ile) + L-isoleucine + ATP = L-isoleucyl-tRNA(Ile) + AMP + diphosphate. Functionally, catalyzes the attachment of isoleucine to tRNA(Ile). As IleRS can inadvertently accommodate and process structurally similar amino acids such as valine, to avoid such errors it has two additional distinct tRNA(Ile)-dependent editing activities. One activity is designated as 'pretransfer' editing and involves the hydrolysis of activated Val-AMP. The other activity is designated 'posttransfer' editing and involves deacylation of mischarged Val-tRNA(Ile). The polypeptide is Isoleucine--tRNA ligase (Borrelia recurrentis (strain A1)).